A 392-amino-acid polypeptide reads, in one-letter code: Succinate--CoA ligase [ADP-forming] subunit beta (392 aa).

Residues 9-248 (KDILKKFGVS…TNEEDPFEVE (240 aa)) enclose the ATP-grasp domain. ATP contacts are provided by residues K50, 57–59 (GRG), E103, M106, and E111. Residues N203 and D217 each coordinate Mg(2+). Substrate contacts are provided by residues N268 and 325–327 (GIV).

Belongs to the succinate/malate CoA ligase beta subunit family. As to quaternary structure, heterotetramer of two alpha and two beta subunits. Mg(2+) serves as cofactor.

The enzyme catalyses succinate + ATP + CoA = succinyl-CoA + ADP + phosphate. The catalysed reaction is GTP + succinate + CoA = succinyl-CoA + GDP + phosphate. It participates in carbohydrate metabolism; tricarboxylic acid cycle; succinate from succinyl-CoA (ligase route): step 1/1. In terms of biological role, succinyl-CoA synthetase functions in the citric acid cycle (TCA), coupling the hydrolysis of succinyl-CoA to the synthesis of either ATP or GTP and thus represents the only step of substrate-level phosphorylation in the TCA. The beta subunit provides nucleotide specificity of the enzyme and binds the substrate succinate, while the binding sites for coenzyme A and phosphate are found in the alpha subunit. This is Succinate--CoA ligase [ADP-forming] subunit beta from Chlorobium limicola (strain DSM 245 / NBRC 103803 / 6330).